A 133-amino-acid chain; its full sequence is Ribosome-binding factor A (133 aa).

Belongs to the RbfA family. Monomer. Binds 30S ribosomal subunits, but not 50S ribosomal subunits or 70S ribosomes.

It localises to the cytoplasm. Its function is as follows. One of several proteins that assist in the late maturation steps of the functional core of the 30S ribosomal subunit. Associates with free 30S ribosomal subunits (but not with 30S subunits that are part of 70S ribosomes or polysomes). Required for efficient processing of 16S rRNA. May interact with the 5'-terminal helix region of 16S rRNA. This chain is Ribosome-binding factor A, found in Pseudomonas fluorescens (strain Pf0-1).